A 423-amino-acid chain; its full sequence is Histidine--tRNA ligase (423 aa).

It belongs to the class-II aminoacyl-tRNA synthetase family. Homodimer.

The protein resides in the cytoplasm. It carries out the reaction tRNA(His) + L-histidine + ATP = L-histidyl-tRNA(His) + AMP + diphosphate + H(+). The polypeptide is Histidine--tRNA ligase (Prochlorococcus marinus (strain MIT 9211)).